The primary structure comprises 351 residues: Sulfate/thiosulfate import ATP-binding protein CysA (351 aa).

The 235-residue stretch at 3-237 (ITVRNLHKRF…PRSAFVYEFL (235 aa)) folds into the ABC transporter domain. 35–42 (GPSGCGKT) contributes to the ATP binding site.

Belongs to the ABC transporter superfamily. Sulfate/tungstate importer (TC 3.A.1.6) family. The complex is composed of two ATP-binding proteins (CysA), two transmembrane proteins (CysT and CysW) and a solute-binding protein (CysP).

It localises to the cell inner membrane. The enzyme catalyses sulfate(out) + ATP + H2O = sulfate(in) + ADP + phosphate + H(+). The catalysed reaction is thiosulfate(out) + ATP + H2O = thiosulfate(in) + ADP + phosphate + H(+). Its function is as follows. Part of the ABC transporter complex CysAWTP involved in sulfate/thiosulfate import. Responsible for energy coupling to the transport system. The polypeptide is Sulfate/thiosulfate import ATP-binding protein CysA (Burkholderia pseudomallei (strain K96243)).